The chain runs to 644 residues: Keratin, type II cytoskeletal 1 (644 aa).

The tract at residues 2–179 (SRQFSSRSGY…DPEIQKVKSR (178 aa)) is head. R12 carries the omega-N-methylarginine modification. Phosphoserine occurs at positions 18 and 21. Residues 22 to 38 (AGIINYQRRTTSSSTRR) show a composition bias toward low complexity. Residues 22–47 (AGIINYQRRTTSSSTRRSGGGGGRFS) form a disordered region. R45 carries the post-translational modification Omega-N-methylarginine. At S66 the chain carries Phosphoserine. At R82 the chain carries Omega-N-methylarginine. The interval 180–215 (EREQIKSLNNQFASFIDKVRFLEQQNQVLQTKWELL) is coil 1A. The IF rod domain maps to 180 to 493 (EREQIKSLNN…TLLEGEESRM (314 aa)). A linker 1 region spans residues 216 to 234 (QQVDTSTRTHNLEPYFESF). Residues 235–326 (INNLRRRVDQ…ALYQAELSQM (92 aa)) are coil 1B. The residue at position 276 (K276) is an N6,N6-dimethyllysine. A linker 12 region spans residues 327-350 (QTQISETNVILSMDNNRSLDLDSI). Phosphoserine is present on S344. The tract at residues 351–489 (IAEVKAQYED…ATYRTLLEGE (139 aa)) is coil 2. Disordered stretches follow at residues 489–523 (EESR…GGGG) and 568–644 (SGGG…GVTR). The tail stretch occupies residues 490–644 (ESRMSGECAP…VSTTYSGVTR (155 aa)). Residues 501–511 (VSVSVSTSHTT) are compositionally biased toward low complexity. Composition is skewed to gly residues over residues 513–523 (SGGGSRGGGGG) and 568–620 (SGGG…GSSS). 2 positions are modified to omega-N-methylarginine: R518 and R588. The segment covering 621 to 631 (GGVKSSGGSSS) has biased composition (low complexity). A compositionally biased stretch (polar residues) spans 632-644 (VKFVSTTYSGVTR).

Belongs to the intermediate filament family. In terms of assembly, heterotetramer of two type I and two type II keratins. Heterodimer with KRT10. Two heterodimers of KRT1 and KRT10 form a heterotetramer. Forms a heterodimer with KRT14; the interaction is more abundant in the absence of KRT5. Interacts with PLEC isoform 1C, when in a heterodimer with KRT10. Interacts with ITGB1 in the presence of RACK1 and SRC, and with RACK1. Interacts with C1QBP; the association represents a cell surface kininogen receptor. Interacts with EPPK1; interaction is dependent of higher-order structure of intermediate filament. In terms of processing, undergoes deimination of some arginine residues (citrullination). As to expression, the source of this protein is neonatal foreskin. The 67-kDa type II keratins are expressed in terminally differentiating epidermis.

It is found in the cell membrane. Its subcellular location is the cytoplasm. In terms of biological role, may regulate the activity of kinases such as PKC and SRC via binding to integrin beta-1 (ITB1) and the receptor of activated protein C kinase 1 (RACK1). In complex with C1QBP is a high affinity receptor for kininogen-1/HMWK. This chain is Keratin, type II cytoskeletal 1 (KRT1), found in Homo sapiens (Human).